Here is a 100-residue protein sequence, read N- to C-terminus: Aspartyl/glutamyl-tRNA(Asn/Gln) amidotransferase subunit C (100 aa).

It belongs to the GatC family. Heterotrimer of A, B and C subunits.

It carries out the reaction L-glutamyl-tRNA(Gln) + L-glutamine + ATP + H2O = L-glutaminyl-tRNA(Gln) + L-glutamate + ADP + phosphate + H(+). The enzyme catalyses L-aspartyl-tRNA(Asn) + L-glutamine + ATP + H2O = L-asparaginyl-tRNA(Asn) + L-glutamate + ADP + phosphate + 2 H(+). In terms of biological role, allows the formation of correctly charged Asn-tRNA(Asn) or Gln-tRNA(Gln) through the transamidation of misacylated Asp-tRNA(Asn) or Glu-tRNA(Gln) in organisms which lack either or both of asparaginyl-tRNA or glutaminyl-tRNA synthetases. The reaction takes place in the presence of glutamine and ATP through an activated phospho-Asp-tRNA(Asn) or phospho-Glu-tRNA(Gln). The chain is Aspartyl/glutamyl-tRNA(Asn/Gln) amidotransferase subunit C from Staphylococcus aureus (strain Newman).